A 107-amino-acid polypeptide reads, in one-letter code: Thioredoxin (107 aa).

Positions 2-107 (PSPIQVTDFS…TLTNALKKYL (106 aa)) constitute a Thioredoxin domain. Catalysis depends on nucleophile residues Cys32 and Cys35. Cys32 and Cys35 are joined by a disulfide.

This sequence belongs to the thioredoxin family.

It is found in the plastid. Its subcellular location is the chloroplast. In terms of biological role, participates in various redox reactions through the reversible oxidation of its active center dithiol to a disulfide and catalyzes dithiol-disulfide exchange reactions. This Cyanidium caldarium (Red alga) protein is Thioredoxin (trxA).